Reading from the N-terminus, the 218-residue chain is Glutathione S-transferase class-mu 26 kDa isozyme 7 (218 aa).

Positions 2–83 (PAKLGYWKIR…YIADKHGMLG (82 aa)) constitute a GST N-terminal domain. Residues 7 to 8 (YW), 41 to 45 (WLGDK), 54 to 55 (NL), and 67 to 68 (QS) contribute to the glutathione site. Positions 85-203 (TPEERARISM…KSERFIKWPL (119 aa)) constitute a GST C-terminal domain. Tyr111 contacts substrate.

This sequence belongs to the GST superfamily. Mu family. Homodimer.

The enzyme catalyses RX + glutathione = an S-substituted glutathione + a halide anion + H(+). Conjugation of reduced glutathione to a wide number of exogenous and endogenous hydrophobic electrophiles. Its function is as follows. GST isoenzymes appear to play a central role in the parasite detoxification system. Other functions are also suspected including a role in increasing the solubility of haematin in the parasite gut. This chain is Glutathione S-transferase class-mu 26 kDa isozyme 7, found in Fasciola hepatica (Liver fluke).